The following is a 37-amino-acid chain: Cytochrome b6-f complex subunit 5 (37 aa).

Residues 5-25 (LLSGIVLGLIPITLAGLFVTA) traverse the membrane as a helical segment.

This sequence belongs to the PetG family. As to quaternary structure, the 4 large subunits of the cytochrome b6-f complex are cytochrome b6, subunit IV (17 kDa polypeptide, PetD), cytochrome f and the Rieske protein, while the 4 small subunits are PetG, PetL, PetM and PetN. The complex functions as a dimer.

The protein localises to the plastid. The protein resides in the chloroplast thylakoid membrane. Functionally, component of the cytochrome b6-f complex, which mediates electron transfer between photosystem II (PSII) and photosystem I (PSI), cyclic electron flow around PSI, and state transitions. PetG is required for either the stability or assembly of the cytochrome b6-f complex. In Cryptomeria japonica (Japanese cedar), this protein is Cytochrome b6-f complex subunit 5.